The chain runs to 329 residues: 36 kDa antigen (329 aa).

Residues 11–31 (AILTGGGALLLGLIVLFYLAY) form a helical membrane-spanning segment.

Belongs to the membrane fusion protein (MFP) (TC 8.A.1) family.

The protein resides in the membrane. This chain is 36 kDa antigen, found in Helicobacter pylori (strain ATCC 700392 / 26695) (Campylobacter pylori).